The chain runs to 147 residues: Hemoglobin subunit beta-M (147 aa).

An N-acetylvaline modification is found at Val2. The Globin domain occupies 3-147 (HLTSEEKNCI…VAHALAHKYH (145 aa)). Position 13 is a phosphothreonine (Thr13). Ser45 carries the post-translational modification Phosphoserine. Lys60 carries the N6-acetyllysine modification. Heme b is bound at residue His64. An N6-acetyllysine modification is found at Lys83. Residue His93 coordinates heme b. S-nitrosocysteine is present on Cys94. Position 145 is an N6-acetyllysine (Lys145).

Belongs to the globin family. Heterotetramer of two alpha chains and two beta chains. In terms of tissue distribution, red blood cells.

Involved in oxygen transport from the lung to the various peripheral tissues. This chain is Hemoglobin subunit beta-M (HBB), found in Didelphis virginiana (North American opossum).